A 322-amino-acid chain; its full sequence is Transaldolase (322 aa).

Lysine 136 acts as the Schiff-base intermediate with substrate in catalysis.

The protein belongs to the transaldolase family. Type 1 subfamily. As to quaternary structure, homodimer.

The protein resides in the cytoplasm. It catalyses the reaction D-sedoheptulose 7-phosphate + D-glyceraldehyde 3-phosphate = D-erythrose 4-phosphate + beta-D-fructose 6-phosphate. Its pathway is carbohydrate degradation; pentose phosphate pathway; D-glyceraldehyde 3-phosphate and beta-D-fructose 6-phosphate from D-ribose 5-phosphate and D-xylulose 5-phosphate (non-oxidative stage): step 2/3. In terms of biological role, transaldolase is important for the balance of metabolites in the pentose-phosphate pathway. The polypeptide is Transaldolase (Xanthomonas campestris pv. campestris (strain B100)).